The primary structure comprises 332 residues: D-xylose-binding periplasmic protein (332 aa).

A signal peptide spans 1 to 23 (MKIKSALLTLVGALTVFSSSAHS).

This sequence belongs to the bacterial solute-binding protein 2 family.

The protein localises to the periplasm. In terms of biological role, involved in the high-affinity D-xylose membrane transport system. Binds with high affinity to xylose. The sequence is that of D-xylose-binding periplasmic protein (xylF) from Haemophilus influenzae (strain ATCC 51907 / DSM 11121 / KW20 / Rd).